The chain runs to 50 residues: Disintegrin pyramidin-A (50 aa).

A Disintegrin domain is found at 1-47; sequence DCASGPCCRDCKFLKEGTICKRARGDNMDDYCNGKTCDCPRNPHKGE. 4 disulfides stabilise this stretch: cysteine 2–cysteine 11, cysteine 7–cysteine 32, cysteine 8–cysteine 37, and cysteine 20–cysteine 39. The short motif at 24–26 is the Cell attachment site element; sequence RGD.

Belongs to the venom metalloproteinase (M12B) family. P-II subfamily. P-IIa sub-subfamily. In terms of assembly, monomer (disintegrin). In terms of tissue distribution, expressed by the venom gland.

The protein resides in the secreted. Its function is as follows. Inhibits ADP-induced human platelet aggregation. The protein is Disintegrin pyramidin-A of Echis pyramidum leakeyi (Leakey's carpet viper).